The following is a 598-amino-acid chain: Peptidoglycan D,D-transpeptidase FtsI homolog (598 aa).

A helical transmembrane segment spans residues 12–33 (IVLVWILFFSGSSLLLGRLFYL). The active-site Acyl-ester intermediate is the Ser-291.

It belongs to the transpeptidase family.

Its subcellular location is the plastid. It localises to the chloroplast membrane. It carries out the reaction Preferential cleavage: (Ac)2-L-Lys-D-Ala-|-D-Ala. Also transpeptidation of peptidyl-alanyl moieties that are N-acyl substituents of D-alanine.. This chain is Peptidoglycan D,D-transpeptidase FtsI homolog (ftsI), found in Mesostigma viride (Green alga).